The primary structure comprises 136 residues: Translation initiation factor 5A (136 aa).

K37 carries the hypusine modification.

Belongs to the eIF-5A family.

It is found in the cytoplasm. Its function is as follows. Functions by promoting the formation of the first peptide bond. The protein is Translation initiation factor 5A (eIF5A) of Thermococcus onnurineus (strain NA1).